A 371-amino-acid chain; its full sequence is Putative glutamate--cysteine ligase 2 (371 aa).

Belongs to the glutamate--cysteine ligase type 2 family. YbdK subfamily.

The catalysed reaction is L-cysteine + L-glutamate + ATP = gamma-L-glutamyl-L-cysteine + ADP + phosphate + H(+). ATP-dependent carboxylate-amine ligase which exhibits weak glutamate--cysteine ligase activity. The sequence is that of Putative glutamate--cysteine ligase 2 from Burkholderia mallei (strain NCTC 10247).